A 417-amino-acid chain; its full sequence is Actin-like protein 7B (417 aa).

Residues 1 to 39 are disordered; sequence MATKNNPSPKPMGTAQGDPGEAGTLPAPEAGIRDTGSTQ. Ser-8 bears the Phosphoserine mark.

It belongs to the actin family.

It is found in the cytoplasm. The protein resides in the cytoskeleton. This is Actin-like protein 7B (Actl7b) from Rattus norvegicus (Rat).